Reading from the N-terminus, the 359-residue chain is Biotin synthase (359 aa).

Residues 1–23 (MSVADSSAADSVAAPDTADTSSS) are disordered. The Radical SAM core domain maps to 76–302 (YFGNTVQLYF…VNPDRELRIA (227 aa)). Residues Cys94, Cys98, and Cys101 each coordinate [4Fe-4S] cluster. [2Fe-2S] cluster is bound by residues Cys138, Cys170, Cys230, and Arg300.

The protein belongs to the radical SAM superfamily. Biotin synthase family. Homodimer. It depends on [4Fe-4S] cluster as a cofactor. The cofactor is [2Fe-2S] cluster.

The catalysed reaction is (4R,5S)-dethiobiotin + (sulfur carrier)-SH + 2 reduced [2Fe-2S]-[ferredoxin] + 2 S-adenosyl-L-methionine = (sulfur carrier)-H + biotin + 2 5'-deoxyadenosine + 2 L-methionine + 2 oxidized [2Fe-2S]-[ferredoxin]. Its pathway is cofactor biosynthesis; biotin biosynthesis; biotin from 7,8-diaminononanoate: step 2/2. Catalyzes the conversion of dethiobiotin (DTB) to biotin by the insertion of a sulfur atom into dethiobiotin via a radical-based mechanism. The polypeptide is Biotin synthase (Rhodopirellula baltica (strain DSM 10527 / NCIMB 13988 / SH1)).